Reading from the N-terminus, the 57-residue chain is MPAIQPPLYLTFLLLILLYLIITLYVWTILTITYKTTVRYAALYQRSFSRWGFDQSL.

At 1-8 the chain is on the virion surface side; the sequence is MPAIQPPL. Residues 9–29 form a helical membrane-spanning segment; it reads YLTFLLLILLYLIITLYVWTI. Topologically, residues 30-57 are intravirion; that stretch reads LTITYKTTVRYAALYQRSFSRWGFDQSL.

The protein belongs to the rubulavirus small hydrophobic protein family. Interacts with host TNFRSF1A, RIPK1 and IRAK1; these interactions interfere with host NF-kappa-B activation at the level of receptor complexes. Interacts with host protein UBQLN4.

It localises to the virion membrane. The protein resides in the host cell membrane. Plays a role in the inhibition of the host NF-kappa-B pathway. This inhibition occurs at the receptor level, by preventing the signaling of TNFR1 as well as IL-1R and TLR3. This chain is Small hydrophobic protein (SH), found in Homo sapiens (Human).